Consider the following 347-residue polypeptide: UDP-3-O-acylglucosamine N-acyltransferase 1 (347 aa).

Residue His-246 is the Proton acceptor of the active site.

Belongs to the transferase hexapeptide repeat family. LpxD subfamily. In terms of assembly, homotrimer.

It carries out the reaction a UDP-3-O-[(3R)-3-hydroxyacyl]-alpha-D-glucosamine + a (3R)-hydroxyacyl-[ACP] = a UDP-2-N,3-O-bis[(3R)-3-hydroxyacyl]-alpha-D-glucosamine + holo-[ACP] + H(+). It participates in bacterial outer membrane biogenesis; LPS lipid A biosynthesis. In terms of biological role, catalyzes the N-acylation of UDP-3-O-acylglucosamine using 3-hydroxyacyl-ACP as the acyl donor. Is involved in the biosynthesis of lipid A, a phosphorylated glycolipid that anchors the lipopolysaccharide to the outer membrane of the cell. This is UDP-3-O-acylglucosamine N-acyltransferase 1 from Francisella tularensis subsp. holarctica (strain LVS).